Consider the following 433-residue polypeptide: Serine--tRNA ligase (433 aa).

235–237 is an L-serine binding site; that stretch reads TSE. 266-268 is an ATP binding site; sequence RSE. Glutamate 289 serves as a coordination point for L-serine. 353–356 serves as a coordination point for ATP; that stretch reads EISS. Serine 388 is an L-serine binding site.

The protein belongs to the class-II aminoacyl-tRNA synthetase family. Type-1 seryl-tRNA synthetase subfamily. As to quaternary structure, homodimer. The tRNA molecule binds across the dimer.

It is found in the cytoplasm. It catalyses the reaction tRNA(Ser) + L-serine + ATP = L-seryl-tRNA(Ser) + AMP + diphosphate + H(+). The enzyme catalyses tRNA(Sec) + L-serine + ATP = L-seryl-tRNA(Sec) + AMP + diphosphate + H(+). Its pathway is aminoacyl-tRNA biosynthesis; selenocysteinyl-tRNA(Sec) biosynthesis; L-seryl-tRNA(Sec) from L-serine and tRNA(Sec): step 1/1. Catalyzes the attachment of serine to tRNA(Ser). Is also able to aminoacylate tRNA(Sec) with serine, to form the misacylated tRNA L-seryl-tRNA(Sec), which will be further converted into selenocysteinyl-tRNA(Sec). The protein is Serine--tRNA ligase of Burkholderia cepacia (Pseudomonas cepacia).